The sequence spans 257 residues: Phycoerythrobilin:ferredoxin oxidoreductase (257 aa).

Belongs to the HY2 family.

It carries out the reaction (3Z)-phycoerythrobilin + oxidized 2[4Fe-4S]-[ferredoxin] = 15,16-dihydrobiliverdin + reduced 2[4Fe-4S]-[ferredoxin] + 2 H(+). Catalyzes the two-electron reduction of the C2 and C3(1) diene system of 15,16-dihydrobiliverdin. The polypeptide is Phycoerythrobilin:ferredoxin oxidoreductase (pebB) (Prochlorococcus marinus (strain SARG / CCMP1375 / SS120)).